Here is a 524-residue protein sequence, read N- to C-terminus: MTINQKEAVDSRRTFAIISHPDAGKTTITEQLLLFGGAIRQAGTVKGKKTGNFAKSDWMEIEKQRGISVTSSVMQFDYQDKRINILDTPGHEDFSEDTYRTLMAVDSAVMVIDSAKGIEAQTKKLFQVVKKRGIPIFTFINKLDRDGREPLELLEELEELLDIESYPMNWPIGMGKGLEGLYDIYNERVELYRPENNGGERFIPLKDGDIPSDLPLHNNSVYQQVLEDVELLVEAGDEFSEEKIARGDQTPVFFGSALTNFGVQTFLETFLQFAPAPHAHKTEEGGEVSPYEKEFSGFVFKIQANMNPAHRDRIAFVRICSGVFERGMDVTLGRTGKKVKLSNVTQFMADARENVTEAVAGDIIGVYDTGNYQIGDTLYEGKMNVQYEELPSFTPELFMKVTAKNVMKQKSFHKGIYQLVQEGAIQLYKTYLTEEYIIGAVGQLQFEVFQYRMSNEYNAEVVMTPMGSKIARWINPEDLDERMSSSRNILARDRFDQPLFLFENQFAERWFADKYPDVELKSLM.

The 269-residue stretch at 10-278 (DSRRTFAIIS…TFLQFAPAPH (269 aa)) folds into the tr-type G domain. GTP contacts are provided by residues 19 to 26 (SHPDAGKT), 87 to 91 (DTPGH), and 141 to 144 (NKLD).

It belongs to the TRAFAC class translation factor GTPase superfamily. Classic translation factor GTPase family. PrfC subfamily.

The protein resides in the cytoplasm. Increases the formation of ribosomal termination complexes and stimulates activities of RF-1 and RF-2. It binds guanine nucleotides and has strong preference for UGA stop codons. It may interact directly with the ribosome. The stimulation of RF-1 and RF-2 is significantly reduced by GTP and GDP, but not by GMP. The chain is Peptide chain release factor 3 from Enterococcus faecalis (strain ATCC 700802 / V583).